Consider the following 210-residue polypeptide: MELQLAIDLLNKEEAAELANKVKDYVDIVEIGTPIVINEGLPAVQYLNDNIDGVKVLADLKIMDAADYEVSQAVKFGADVVTILGVAEDASIKGAVEEAHKNGKELLVDMIAVQDLQKRAKELDELGADYIAVHTGYDLQAEGESPLESLRQVKSVINNSKVAVIGGIKPDTIKEVVAEEPDLVVVGGGIANADDPVAAAKACKDAIEGR.

Belongs to the HPS/KGPDC family. HPS subfamily.

It catalyses the reaction D-ribulose 5-phosphate + formaldehyde = D-arabino-hex-3-ulose 6-phosphate. It participates in one-carbon metabolism; formaldehyde assimilation via RuMP pathway; D-fructose 6-phosphate from D-ribulose 5-phosphate and formaldehyde: step 1/2. Catalyzes the condensation of ribulose 5-phosphate with formaldehyde to form 3-hexulose 6-phosphate. In Staphylococcus saprophyticus subsp. saprophyticus (strain ATCC 15305 / DSM 20229 / NCIMB 8711 / NCTC 7292 / S-41), this protein is 3-hexulose-6-phosphate synthase 3.